Here is a 147-residue protein sequence, read N- to C-terminus: Hemoglobin subunit beta (147 aa).

The region spanning 3-147 (NWTKTEKATI…VMSALGKQYH (145 aa)) is the Globin domain. 2 residues coordinate heme b: H64 and H93.

Belongs to the globin family. Heterotetramer of two alpha chains and two beta chains. In terms of tissue distribution, red blood cells.

Its function is as follows. Involved in oxygen transport from gills to the various peripheral tissues. This chain is Hemoglobin subunit beta (hbb), found in Gymnodraco acuticeps (Antarctic dragonfish).